The primary structure comprises 154 residues: Aspartate carbamoyltransferase regulatory chain (154 aa).

Cys109, Cys114, Cys138, and Cys141 together coordinate Zn(2+).

It belongs to the PyrI family. Contains catalytic and regulatory chains. Requires Zn(2+) as cofactor.

Its function is as follows. Involved in allosteric regulation of aspartate carbamoyltransferase. The polypeptide is Aspartate carbamoyltransferase regulatory chain (Sodalis glossinidius (strain morsitans)).